The chain runs to 367 residues: Protein trichome birefringence-like 39 (367 aa).

A helical; Signal-anchor for type II membrane protein membrane pass occupies residues 7–29; that stretch reads GNPSFLFFFFFFLCLSTVSAYIN. The short motif at 120-122 is the GDS motif element; the sequence is GDS. The short motif at 343 to 357 is the DCXHWCLPGXXDXWN motif element; it reads DCSHWCLPGLPDTWN.

Belongs to the PC-esterase family. TBL subfamily.

It is found in the membrane. Functionally, may act as a bridging protein that binds pectin and other cell wall polysaccharides. Probably involved in maintaining esterification of pectins. May be involved in the specific O-acetylation of cell wall polymers. This is Protein trichome birefringence-like 39 (TBL39) from Arabidopsis thaliana (Mouse-ear cress).